We begin with the raw amino-acid sequence, 288 residues long: MNDVSVEYQAIEEKDVLLASKADDCHPIFRRAPSSVEFNKLRKRLLRHMRQALDDFSMLSTGKKWLVALSGGKDSYGLLALLLDLKWRGLLPVEILACNLDQGQPGFPKHILPDFLSSYKIPYRIEYQDTYSIVTDKLAQTQTYCSLCSRLRRGNLYRIAREEGCSALILGHHRDDVLETFFMNLFHGGRLAAMPGKLKNDEGDLFVLRPLVYAAEEDMEKFSQAMQFPIIPCNLCGSQDGLQRNAMKEMLKNIERQMPGRKDTMIRALANVRPSHLLDKKFFDFKTY.

The PP-loop motif signature appears at 70–75 (SGGKDS). 3 residues coordinate [4Fe-4S] cluster: C145, C148, and C236.

The protein belongs to the TtcA family. In terms of assembly, homodimer. It depends on Mg(2+) as a cofactor. [4Fe-4S] cluster is required as a cofactor.

It localises to the cytoplasm. It carries out the reaction cytidine(32) in tRNA + S-sulfanyl-L-cysteinyl-[cysteine desulfurase] + AH2 + ATP = 2-thiocytidine(32) in tRNA + L-cysteinyl-[cysteine desulfurase] + A + AMP + diphosphate + H(+). It participates in tRNA modification. Functionally, catalyzes the ATP-dependent 2-thiolation of cytidine in position 32 of tRNA, to form 2-thiocytidine (s(2)C32). The sulfur atoms are provided by the cysteine/cysteine desulfurase (IscS) system. This Bartonella tribocorum (strain CIP 105476 / IBS 506) protein is tRNA-cytidine(32) 2-sulfurtransferase.